We begin with the raw amino-acid sequence, 195 residues long: Holliday junction branch migration complex subunit RuvA (195 aa).

The tract at residues 1–66 is domain I; the sequence is MNYLVFKVIY…LIIKDLYGFR (66 aa). The interval 67-141 is domain II; the sequence is TYNERLLFID…KYINKVSEKN (75 aa). A region of interest (flexible linker) is located at residue Asn141. The segment at 141–195 is domain III; sequence NPWAKELSIGLENLGYDKKDIEYAITKVKVDTQQNIDISEIIGCAIKEISLRHEN.

It belongs to the RuvA family. In terms of assembly, homotetramer. Forms an RuvA(8)-RuvB(12)-Holliday junction (HJ) complex. HJ DNA is sandwiched between 2 RuvA tetramers; dsDNA enters through RuvA and exits via RuvB. An RuvB hexamer assembles on each DNA strand where it exits the tetramer. Each RuvB hexamer is contacted by two RuvA subunits (via domain III) on 2 adjacent RuvB subunits; this complex drives branch migration. In the full resolvosome a probable DNA-RuvA(4)-RuvB(12)-RuvC(2) complex forms which resolves the HJ.

The protein localises to the cytoplasm. Its function is as follows. The RuvA-RuvB-RuvC complex processes Holliday junction (HJ) DNA during genetic recombination and DNA repair, while the RuvA-RuvB complex plays an important role in the rescue of blocked DNA replication forks via replication fork reversal (RFR). RuvA specifically binds to HJ cruciform DNA, conferring on it an open structure. The RuvB hexamer acts as an ATP-dependent pump, pulling dsDNA into and through the RuvAB complex. HJ branch migration allows RuvC to scan DNA until it finds its consensus sequence, where it cleaves and resolves the cruciform DNA. This Ureaplasma urealyticum serovar 10 (strain ATCC 33699 / Western) protein is Holliday junction branch migration complex subunit RuvA.